The chain runs to 283 residues: NADPH-dependent 7-cyano-7-deazaguanine reductase (283 aa).

89 to 91 (IES) contributes to the substrate binding site. NADPH is bound at residue 91 to 92 (SK). The active-site Thioimide intermediate is C190. D197 functions as the Proton donor in the catalytic mechanism. Residue 229–230 (HE) participates in substrate binding. 258-259 (RG) contributes to the NADPH binding site.

This sequence belongs to the GTP cyclohydrolase I family. QueF type 2 subfamily. Homodimer.

It localises to the cytoplasm. It carries out the reaction 7-aminomethyl-7-carbaguanine + 2 NADP(+) = 7-cyano-7-deazaguanine + 2 NADPH + 3 H(+). It participates in tRNA modification; tRNA-queuosine biosynthesis. Its function is as follows. Catalyzes the NADPH-dependent reduction of 7-cyano-7-deazaguanine (preQ0) to 7-aminomethyl-7-deazaguanine (preQ1). This is NADPH-dependent 7-cyano-7-deazaguanine reductase from Aromatoleum aromaticum (strain DSM 19018 / LMG 30748 / EbN1) (Azoarcus sp. (strain EbN1)).